The primary structure comprises 292 residues: Probable starch degradation products transport system permease protein AmyD (292 aa).

6 helical membrane passes run 15 to 35 (WLFI…PFII), 77 to 97 (FAVA…MLVT), 110 to 130 (FYLP…FIFV), 156 to 176 (FWGL…VIYI), 205 to 225 (VFPL…SNSF), and 260 to 280 (MAVG…ISVI). The region spanning 71–281 (IIFTAKFAVA…LIIAVISVIQ (211 aa)) is the ABC transmembrane type-1 domain.

The protein belongs to the binding-protein-dependent transport system permease family. MalFG subfamily.

Its subcellular location is the cell membrane. Its function is as follows. Probably part of a binding-protein-dependent transport system starch degradation products. Probably responsible for the translocation of the substrate across the membrane. The sequence is that of Probable starch degradation products transport system permease protein AmyD (amyD) from Thermoanaerobacterium thermosulfurigenes (Clostridium thermosulfurogenes).